The chain runs to 525 residues: Nucleolar and spindle-associated protein 1-C (525 aa).

Disordered stretches follow at residues F43–H203, T250–A293, T373–K398, and L452–Q525. Residues S58–S69 show a composition bias toward polar residues. Over residues T82–L92 the composition is skewed to basic residues. A compositionally biased stretch (basic and acidic residues) spans K93–F102. Positions S113 to L127 are enriched in polar residues. Basic and acidic residues predominate over residues T160–S169. The span at P270–R285 shows a compositional bias: polar residues. Residues C476–L494 show a composition bias toward polar residues. Residues Q495–Q514 are compositionally biased toward basic and acidic residues.

The protein belongs to the NUSAP family. In terms of assembly, interacts with DNA, microtubules, ipo7, kpna2 and kpnb1. Microtubule stabilization is inhibited by ipo7 and kpna2, while microtubule bundling is inhibited by kpnb1. Active GTP-bound ran causes dissociation of ipo7 and kpnb1.

The protein localises to the cytoplasm. The protein resides in the nucleus. Its subcellular location is the cytoskeleton. It is found in the spindle. Microtubule-associated protein with the capacity to bundle and stabilize microtubules. May associate with chromosomes and promote the organization of meiotic or mitotic spindle microtubules around them. This chain is Nucleolar and spindle-associated protein 1-C (nusap1-c), found in Xenopus laevis (African clawed frog).